A 418-amino-acid chain; its full sequence is AP-3 complex subunit mu-1 (418 aa).

The region spanning 176-417 (NNEAYFDVVE…VTKAGKFQVR (242 aa)) is the MHD domain.

The protein belongs to the adaptor complexes medium subunit family. As to quaternary structure, adaptor protein complex 3 (AP-3) is a heterotetramer composed of two large adaptins (delta-type subunit AP3D1 and beta-type subunit AP3B1 or AP3B2), a medium adaptin (mu-type subunit AP3M1 or AP3M2) and a small adaptin (sigma-type subunit APS1 or AP3S2). Interacts with AGAP1. AP-3 associates with the BLOC-1 complex.

The protein resides in the golgi apparatus. It is found in the cytoplasmic vesicle membrane. Functionally, part of the AP-3 complex, an adaptor-related complex which is not clathrin-associated. The complex is associated with the Golgi region as well as more peripheral structures. It facilitates the budding of vesicles from the Golgi membrane and may be directly involved in trafficking to lysosomes. In concert with the BLOC-1 complex, AP-3 is required to target cargos into vesicles assembled at cell bodies for delivery into neurites and nerve terminals. This chain is AP-3 complex subunit mu-1 (Ap3m1), found in Mus musculus (Mouse).